Consider the following 835-residue polypeptide: Protein VP3 (835 aa).

An N7-methyltransferase activity region spans residues 171-245 (KKIKERMTTS…KDTIKLKQER (75 aa)). The interval 246 to 428 (WLGKRLSQFD…KNIKRFIPKG (183 aa)) is 2'-O-methyltransferase activity. The tract at residues 429–555 (VLYSYINNII…NHLFMLSGTN (127 aa)) is N7-methyltransferase activity. The GTase/RTPase activity stretch occupies residues 556–692 (KYFNMDQFAN…NYINKVYSIT (137 aa)). A 2'-5'-phosphodiesterase activity region spans residues 693-835 (YADDPNYFIG…KGDTVFDMAE (143 aa)). Catalysis depends on for 2'-5'-phosphodiesterase activity residues His-718, Thr-720, His-797, and Thr-799.

The protein belongs to the rotavirus VP3 family. In terms of assembly, interacts with VP1. Interacts with VP2.

Its subcellular location is the virion. It carries out the reaction a 5'-end diphospho-ribonucleoside in mRNA + GTP + H(+) = a 5'-end (5'-triphosphoguanosine)-ribonucleoside in mRNA + diphosphate. The enzyme catalyses a 5'-end (5'-triphosphoguanosine)-ribonucleoside in mRNA + S-adenosyl-L-methionine = a 5'-end (N(7)-methyl 5'-triphosphoguanosine)-ribonucleoside in mRNA + S-adenosyl-L-homocysteine. The catalysed reaction is 5'-triphosphoadenylyl-(2'-&gt;5')-adenylyl-(2'-&gt;5')-adenosine + 2 H2O = 2 AMP + ATP + 2 H(+). Multifunctional enzyme involved in mRNA capping. Catalyzes the formation of the 5' cap structure on the viral plus-strand transcripts. Specifically binds to GTP and displays guanylyltransferase and methyltransferase activities. Has affinity for ssRNA but not for dsRNA. Capping activity is non-specific and caps RNAs that initiate with either a G or an A residue. Together with VP1 polymerase, forms a VP1-VP3 complex positioned near the channels situated at each of the five-fold vertices of the core. Following infection, the outermost layer of the virus is lost, leaving a double-layered particle (DLP) made up of the core and VP6 shell. VP1 then catalyzes the transcription of fully conservative plus-strand genomic RNAs that are capped by VP3 and extruded through the DLP's channels into the cytoplasm where they function as mRNAs for translation of viral proteins. DLPs probably have an RNA triphosphatase activity as well, whereas open cores do not. In terms of biological role, counteracts the host innate immune response thanks to its phosphodiesterase that degrades the 5'-triphosphorylated, 2'-5' linked adenylate oligomers produced by the host cell IFN-inducible 2',5'-oligoadenylate synthetase (OAS). The host RNaseL is therefore not activated. This Rotavirus A (strain RVA/Cow/United Kingdom/UK/1975/G6P7[5]) (RV-A) protein is Protein VP3.